The sequence spans 44 residues: uncharacterized protein (44 aa).

This is an uncharacterized protein from Treponema pallidum (strain Nichols).